A 297-amino-acid polypeptide reads, in one-letter code: Undecaprenyl-diphosphatase (297 aa).

A run of 7 helical transmembrane segments spans residues 39–59 (PGAAYSAVIQLGTVAAVLIYF), 85–105 (ARLAWFVLVGTLPVGIAGLTL), 113–133 (FRSLYVISGSLIVLALILLVV), 151–171 (GILIGMWQALALIPGASRSGT), 190–210 (SFLLSIPATTLAGVFELKHLL), 220–240 (ALWVGTLVAFASGMAAIAWLL), and 249–269 (LVFVVYRVALGVLLLVLLQTG).

This sequence belongs to the UppP family.

The protein localises to the cell inner membrane. The enzyme catalyses di-trans,octa-cis-undecaprenyl diphosphate + H2O = di-trans,octa-cis-undecaprenyl phosphate + phosphate + H(+). Catalyzes the dephosphorylation of undecaprenyl diphosphate (UPP). Confers resistance to bacitracin. This Myxococcus xanthus (strain DK1622) protein is Undecaprenyl-diphosphatase.